Here is a 624-residue protein sequence, read N- to C-terminus: MAVIKEKAECCTLLVDELYGQLPARVYATLFQRGKLSVRLISQFSKLSARQVKNGLCVLQQHNLLFYSVDANSGEAEYSVNHEYAYNLVRTGKILEMVDNSYGPAGRDVMQNLLLLGQTRISDLVAAYQAKINEVNNDDAWLNDKKPELAIKSKAQLNSVLCRLIEAELIDVIHSKTFQSAHEIEKQVHREVMDVYFSNGIKGTKAKIEFEQRVAEGLRKVREESKTLKRKLAQNGGASKRRKLAVGNETNGAPEEEEDLDPALDPRQVIRINYEKCIVELRSRRLVQYVNETLGETTGYVYGQLLKQLTKNISRCKSDPLIDALTPEEKVTPSVTTNEILDKVKTSIDLTLGIGKIPSKSISKSAAERLTPLAPKDKIPFMNQDDSDDDEEDGDYSDSDEEMDTKKENGDAPVARMSRPEQLRQHLLLLAEGHPGFVRHCGEDEWTVDFKPLMENLRATELDSIIEQTSGRQGLRLIRILRTKGKLGEQALQSLSLMRKVDLQQKMLEMRLVGFAHTQEVPRDNKADPKKSIFLWYCDTEQAYSSLIAKCYATMVHCLQVLEVRRQKDKDVLSLAKRTNVKGKEKDMMRDESYARFAKFLKDERLLMAEMMRIDDTLALLQDY.

Disordered regions lie at residues lysine 229–leucine 260 and leucine 373–serine 418. A compositionally biased stretch (acidic residues) spans aspartate 385 to methionine 403. The tract at residues cysteine 551–valine 572 is leucine-zipper.

Belongs to the RNA polymerase beta chain family. Component of the RNA polymerase III (Pol III) complex consisting of 17 subunits.

The protein localises to the nucleus. DNA-dependent RNA polymerase catalyzes the transcription of DNA into RNA using the four ribonucleoside triphosphates as substrates. Specific core component of RNA polymerase III which synthesizes small RNAs, such as 5S rRNA and tRNAs. The chain is DNA-directed RNA polymerase III subunit rpc-3 (rpc-82) from Neurospora crassa (strain ATCC 24698 / 74-OR23-1A / CBS 708.71 / DSM 1257 / FGSC 987).